A 400-amino-acid chain; its full sequence is Elongation factor Tu (400 aa).

A tr-type G domain is found at 10–209 (KPHVNIGTIG…VVDKYIPTPQ (200 aa)). Residues 19–26 (GHVDHGKT) form a G1 region. 19-26 (GHVDHGKT) serves as a coordination point for GTP. Residue Thr26 participates in Mg(2+) binding. The tract at residues 60 to 64 (GITIN) is G2. The tract at residues 81-84 (DCPG) is G3. GTP-binding positions include 81–85 (DCPGH) and 136–139 (NKVD). The segment at 136–139 (NKVD) is G4. Residues 174 to 176 (SAL) form a G5 region.

This sequence belongs to the TRAFAC class translation factor GTPase superfamily. Classic translation factor GTPase family. EF-Tu/EF-1A subfamily. In terms of assembly, monomer.

It is found in the cytoplasm. The enzyme catalyses GTP + H2O = GDP + phosphate + H(+). GTP hydrolase that promotes the GTP-dependent binding of aminoacyl-tRNA to the A-site of ribosomes during protein biosynthesis. This is Elongation factor Tu from Caldicellulosiruptor saccharolyticus (strain ATCC 43494 / DSM 8903 / Tp8T 6331).